Consider the following 1400-residue polypeptide: DNA-directed RNA polymerase subunit beta' (1400 aa).

The Zn(2+) site is built by Cys71, Cys73, Cys86, and Cys89. Asp462, Asp464, and Asp466 together coordinate Mg(2+). Zn(2+) is bound by residues Cys810, Cys884, Cys891, and Cys894.

Belongs to the RNA polymerase beta' chain family. In terms of assembly, the RNAP catalytic core consists of 2 alpha, 1 beta, 1 beta' and 1 omega subunit. When a sigma factor is associated with the core the holoenzyme is formed, which can initiate transcription. The cofactor is Mg(2+). Requires Zn(2+) as cofactor.

It carries out the reaction RNA(n) + a ribonucleoside 5'-triphosphate = RNA(n+1) + diphosphate. In terms of biological role, DNA-dependent RNA polymerase catalyzes the transcription of DNA into RNA using the four ribonucleoside triphosphates as substrates. The sequence is that of DNA-directed RNA polymerase subunit beta' from Rhodopseudomonas palustris (strain BisA53).